The sequence spans 520 residues: Cytochrome b5 reductase 4 (520 aa).

Met-1 is modified (N-acetylmethionine). Residues 1-27 form a disordered region; it reads MLNVPSQAFPAPGSQQRVASQGRSKVP. A compositionally biased stretch (polar residues) spans 13–23; that stretch reads GSQQRVASQGR. The 77-residue stretch at 54–130 folds into the Cytochrome b5 heme-binding domain; the sequence is LIEVTEEELK…LKECLVGRMA (77 aa). Positions 89 and 112 each coordinate heme. Residues 164–255 form the CS domain; it reads PSSPSYDWFQ…KETVSWKCLG (92 aa). The FAD-binding FR-type domain maps to 272–384; it reads LYYRQCQLIS…SGPEGNFKVS (113 aa). Residues 364 to 379 and 391 to 423 each bind FAD; these read DRLQ…GPEG and DLFL…KVKL.

This sequence belongs to the flavoprotein pyridine nucleotide cytochrome reductase family. FAD serves as cofactor. Isoform 2 is expressed in testis, brain, skeletal muscle and in the male germline.

The protein resides in the endoplasmic reticulum. The enzyme catalyses 2 Fe(III)-[cytochrome b5] + NADH = 2 Fe(II)-[cytochrome b5] + NAD(+) + H(+). In terms of biological role, NADH-cytochrome b5 reductase involved in endoplasmic reticulum stress response pathway. Plays a critical role in protecting pancreatic beta-cells against oxidant stress, possibly by protecting the cell from excess buildup of reactive oxygen species (ROS). This is Cytochrome b5 reductase 4 (Cyb5r4) from Rattus norvegicus (Rat).